Reading from the N-terminus, the 308-residue chain is uncharacterized protein (308 aa).

The span at 43-55 (SQYGTWADQHQNG) shows a compositional bias: polar residues. The interval 43-289 (SQYGTWADQH…KEERSEECSP (247 aa)) is disordered. Residue Ser62 is modified to Phosphoserine. Positions 80-90 (HLSSYTESTSV) are enriched in polar residues. The span at 91 to 109 (EQRDSSRDRRSSSVDRSSS) shows a compositional bias: basic and acidic residues. Over residues 136 to 152 (IHQTSVLDSSALKTRVQ) the composition is skewed to polar residues. The span at 153–168 (LSKRSRRRAPISHSLR) shows a compositional bias: basic residues. Ser166 is modified (phosphoserine). Basic and acidic residues-rich tracts occupy residues 175-186 (SESRSPLEEESH) and 193-216 (DSTE…ERTP). Residues Ser205, Ser259, Ser262, and Ser288 each carry the phosphoserine modification.

This is an uncharacterized protein from Mus musculus (Mouse).